The primary structure comprises 210 residues: Adenylate kinase (210 aa).

10 to 15 (GSGKGT) provides a ligand contact to ATP. The NMP stretch occupies residues 28–57 (SVGKVLRTVMESNTAEADVVKKFIKSGKLV). AMP contacts are provided by residues arginine 34, 55–57 (KLV), 83–86 (GYPR), and glutamine 90. The LID stretch occupies residues 120–158 (GRISCTDCGTIYNKLYCMPKINGVCDICNSSSFQNRVDD). Position 121 (arginine 121) interacts with ATP. Residues cysteine 124 and cysteine 127 each coordinate Zn(2+). Residue 130–131 (IY) coordinates ATP. Residues cysteine 144 and cysteine 147 each contribute to the Zn(2+) site. Arginine 155 and arginine 166 together coordinate AMP. Residue glutamine 194 participates in ATP binding.

The protein belongs to the adenylate kinase family. In terms of assembly, monomer.

It is found in the cytoplasm. It catalyses the reaction AMP + ATP = 2 ADP. Its pathway is purine metabolism; AMP biosynthesis via salvage pathway; AMP from ADP: step 1/1. Its function is as follows. Catalyzes the reversible transfer of the terminal phosphate group between ATP and AMP. Plays an important role in cellular energy homeostasis and in adenine nucleotide metabolism. The chain is Adenylate kinase from Orientia tsutsugamushi (strain Boryong) (Rickettsia tsutsugamushi).